A 92-amino-acid chain; its full sequence is Isoleucine--tRNA ligase (92 aa).

Zn(2+) is bound by residues Cys-55, Cys-58, Cys-75, and Cys-78.

This sequence belongs to the class-I aminoacyl-tRNA synthetase family. IleS type 1 subfamily. Monomer. It depends on Zn(2+) as a cofactor.

The protein resides in the cytoplasm. It catalyses the reaction tRNA(Ile) + L-isoleucine + ATP = L-isoleucyl-tRNA(Ile) + AMP + diphosphate. Its function is as follows. Catalyzes the attachment of isoleucine to tRNA(Ile). As IleRS can inadvertently accommodate and process structurally similar amino acids such as valine, to avoid such errors it has two additional distinct tRNA(Ile)-dependent editing activities. One activity is designated as 'pretransfer' editing and involves the hydrolysis of activated Val-AMP. The other activity is designated 'posttransfer' editing and involves deacylation of mischarged Val-tRNA(Ile). This is Isoleucine--tRNA ligase (ileS) from Klebsiella aerogenes (Enterobacter aerogenes).